A 701-amino-acid polypeptide reads, in one-letter code: ABC transporter G family member 23 (701 aa).

Residues 7 to 237 form the ABC transporter domain; sequence INLNNVSRSY…YECSLLEDVY (231 aa). An ATP-binding site is contributed by 39–46; it reads GSSGSGKT. 6 helical membrane passes run 335–355, 493–513, 541–561, 574–596, 608–628, and 665–685; these read FPLVFEIISPSLLITLFFLAI, FLAPAMICIITYVHCMNFLSI, HILAHIPILLVQFSIQLLIAV, LIYLFFILINTVGMCQGILISLI, LAIFICSLCMAGIIWPTEAII, and LIIIISYIIGTFSLIVISTPI. The 228-residue stretch at 459 to 686 folds into the ABC transmembrane type-2 domain; that stretch reads FQKAFNKIAN…SLIVISTPIG (228 aa).

This sequence belongs to the ABC transporter superfamily. ABCG family.

It localises to the membrane. This Dictyostelium discoideum (Social amoeba) protein is ABC transporter G family member 23 (abcG23).